Consider the following 298-residue polypeptide: Calcium-binding protein 1 (298 aa).

Residues 1-10 (MSSHIAKSES) are compositionally biased toward basic and acidic residues. Positions 1–131 (MSSHIAKSES…APAGTPEADP (131 aa)) are disordered. S2 carries N-myristoyl glycine lipidation. The S-palmitoyl cysteine moiety is linked to residue H4. Over residues 11 to 25 (KTSLLKAAAASGGSR) the composition is skewed to low complexity. 4 EF-hand domains span residues 153-188 (EEIE…MGYM), 207-224 (GHVD…KLLA), 230-265 (IGVK…LLGH), and 267-298 (VGHR…MMSR). The Ca(2+) site is built by D166, D168, D170, Y172, and D177. Ca(2+) is bound by residues D243, N245, D247, and E249. S251 carries the phosphoserine modification. Residues E254, D280, N282, D284, R286, and E291 each contribute to the Ca(2+) site.

As to quaternary structure, interacts with ITPR1, ITPR2 and ITPR3. The strength of this interaction inversely correlates with calcium concentration. Interacts with CACNA1A (via C-terminal CDB motif) in the pre- and postsynaptic membranes. Interacts with CACNA1C. Interacts with CACNA1D. Interacts (via EF-hands 1 and 2) at microtubules with MAP1LC3B. Interacts (via EF-hands 1 and 2) with NSMF (via the central NLS-containing motif region), the interaction occurs in a calcium dependent manner after synaptic NMDA receptor stimulation and prevents nuclear import of NSMF. Interacts with MYO1C and TRPC5. Interacts with SPACA9. In terms of processing, phosphorylated. The phosphorylation regulates the activity. Somatodendritic compartment of neurons. Restricted expression in retina to a subpopulation of amacrine, bipolar, and ganglion cells. According to PubMed:11906216, expression is heterogeneous within brain regions and their major cell types and does not match with those of marker proteins for characterized neuronal subpopulations. Isoform 2: Minor isoform expressed in the brain, in the granule cell layer of the cerebellum, at low level. Not developmentally regulated. Isoform 3: Minor isoform expressed in the brain, in the granule cell layer. of the cerebellum, at low level. Not developmentally regulated.

It localises to the cytoplasm. Its subcellular location is the cytoskeleton. Functionally, modulates calcium-dependent activity of inositol 1,4,5-triphosphate receptors (ITPRs). Inhibits agonist-induced intracellular calcium signaling. Enhances inactivation and does not support calcium-dependent facilitation of voltage-dependent P/Q-type calcium channels. Causes calcium-dependent facilitation and inhibits inactivation of L-type calcium channels by binding to the same sites as calmodulin in the C-terminal domain of CACNA1C, but has an opposite effect on channel function. Suppresses the calcium-dependent inactivation of CACNA1D. Inhibits TRPC5 channels. Prevents NMDA receptor-induced cellular degeneration. Required for the normal transfer of light signals through the retina. This is Calcium-binding protein 1 (Cabp1) from Rattus norvegicus (Rat).